A 172-amino-acid chain; its full sequence is Inorganic pyrophosphatase (172 aa).

K29, R43, and Y55 together coordinate substrate. 3 residues coordinate Mg(2+): D65, D70, and D102. Y141 lines the substrate pocket.

The protein belongs to the PPase family. Homohexamer. Mg(2+) serves as cofactor.

Its subcellular location is the cytoplasm. It catalyses the reaction diphosphate + H2O = 2 phosphate + H(+). Its function is as follows. Catalyzes the hydrolysis of inorganic pyrophosphate (PPi) forming two phosphate ions. The chain is Inorganic pyrophosphatase from Rickettsia prowazekii (strain Madrid E).